The following is a 210-amino-acid chain: Calcium-activated potassium channel subunit beta-4 (210 aa).

Over 1 to 19 (MAKLRVSYEYTEAEDKSIR) the chain is Cytoplasmic. A helical membrane pass occupies residues 20–40 (LGLFLIVSGILSLFIFGFCWL). Residues 41 to 167 (SPALQDLQAT…DVLLQRTHDE (127 aa)) are Extracellular-facing. N-linked (GlcNAc...) asparagine glycosylation is found at Asn-53 and Asn-90. A helical membrane pass occupies residues 168–188 (IVLLHCFLWPVVAFVVGVLIV). Topologically, residues 189 to 210 (VLTICAKSLAVKAEAMKKRKFS) are cytoplasmic.

This sequence belongs to the KCNMB (TC 8.A.14.1) family. KCNMB4 subfamily. In terms of assembly, interacts with KCNMA1 tetramer. There are probably 4 molecules of KCMNB4 per KCNMA1 tetramer. Interacts with FMR1 (via N-terminus). Phosphorylated. Phosphorylation modulates its effect on KCNMA1 activation kinetics. Post-translationally, N-glycosylated. A highly glycosylated form is promoted by KCNMA1. Glycosylation, which is not required for the interaction with KCNMA1 and subcellular location, increases protection against charybdotoxin.

Its subcellular location is the membrane. Regulatory subunit of the calcium activated potassium KCNMA1 (maxiK) channel. Modulates the calcium sensitivity and gating kinetics of KCNMA1, thereby contributing to KCNMA1 channel diversity. Decreases the gating kinetics and calcium sensitivity of the KCNMA1 channel, but with fast deactivation kinetics. May decrease KCNMA1 channel openings at low calcium concentrations but increases channel openings at high calcium concentrations. Makes KCNMA1 channel resistant to 100 nM charybdotoxin (CTX) toxin concentrations. In Rattus norvegicus (Rat), this protein is Calcium-activated potassium channel subunit beta-4 (Kcnmb4).